Reading from the N-terminus, the 329-residue chain is Biotin synthase (329 aa).

The region spanning 36-260 (GEIQLCTLLS…VAVARITMPK (225 aa)) is the Radical SAM core domain. [4Fe-4S] cluster-binding residues include Cys-51, Cys-55, and Cys-58. [2Fe-2S] cluster is bound by residues Cys-95, Cys-126, Cys-186, and Arg-264.

Belongs to the radical SAM superfamily. Biotin synthase family. As to quaternary structure, homodimer. Requires [4Fe-4S] cluster as cofactor. [2Fe-2S] cluster serves as cofactor.

The enzyme catalyses (4R,5S)-dethiobiotin + (sulfur carrier)-SH + 2 reduced [2Fe-2S]-[ferredoxin] + 2 S-adenosyl-L-methionine = (sulfur carrier)-H + biotin + 2 5'-deoxyadenosine + 2 L-methionine + 2 oxidized [2Fe-2S]-[ferredoxin]. It participates in cofactor biosynthesis; biotin biosynthesis; biotin from 7,8-diaminononanoate: step 2/2. Catalyzes the conversion of dethiobiotin (DTB) to biotin by the insertion of a sulfur atom into dethiobiotin via a radical-based mechanism. In Sphingopyxis alaskensis (strain DSM 13593 / LMG 18877 / RB2256) (Sphingomonas alaskensis), this protein is Biotin synthase.